Consider the following 554-residue polypeptide: 2-succinyl-5-enolpyruvyl-6-hydroxy-3-cyclohexene-1-carboxylate synthase (554 aa).

This sequence belongs to the TPP enzyme family. MenD subfamily. As to quaternary structure, homodimer. It depends on Mg(2+) as a cofactor. The cofactor is Mn(2+). Thiamine diphosphate is required as a cofactor.

The catalysed reaction is isochorismate + 2-oxoglutarate + H(+) = 5-enolpyruvoyl-6-hydroxy-2-succinyl-cyclohex-3-ene-1-carboxylate + CO2. It functions in the pathway quinol/quinone metabolism; 1,4-dihydroxy-2-naphthoate biosynthesis; 1,4-dihydroxy-2-naphthoate from chorismate: step 2/7. Its pathway is quinol/quinone metabolism; menaquinone biosynthesis. Functionally, catalyzes the thiamine diphosphate-dependent decarboxylation of 2-oxoglutarate and the subsequent addition of the resulting succinic semialdehyde-thiamine pyrophosphate anion to isochorismate to yield 2-succinyl-5-enolpyruvyl-6-hydroxy-3-cyclohexene-1-carboxylate (SEPHCHC). This is 2-succinyl-5-enolpyruvyl-6-hydroxy-3-cyclohexene-1-carboxylate synthase from Mycobacterium tuberculosis (strain ATCC 25177 / H37Ra).